Reading from the N-terminus, the 262-residue chain is Ribosome biogenesis GTPase A (262 aa).

The region spanning 12 to 157 (KRQIKDLLRL…ILDTPGILYK (146 aa)) is the CP-type G domain. GTP contacts are provided by residues 54–57 (NKVD), 109–114 (NTGKST), and Gly153.

Belongs to the TRAFAC class YlqF/YawG GTPase family. MTG1 subfamily.

It localises to the cytoplasm. Its function is as follows. Required for a late step of 50S ribosomal subunit assembly. Has GTPase activity. Binds to the 23S rRNA. The sequence is that of Ribosome biogenesis GTPase A from Thermotoga maritima (strain ATCC 43589 / DSM 3109 / JCM 10099 / NBRC 100826 / MSB8).